A 452-amino-acid chain; its full sequence is Chromosomal replication initiator protein DnaA (452 aa).

Residues 1–84 are domain I, interacts with DnaA modulators; the sequence is MTENEQIFWN…SIEYVFEETQ (84 aa). The interval 84 to 110 is domain II; the sequence is QSTSNSPQISQNKTAELATETLPFVQN. The tract at residues 111 to 329 is domain III, AAA+ region; it reads DLNPKYSFDN…GALKDISLVA (219 aa). ATP is bound by residues Gly-155, Gly-157, Lys-158, and Thr-159. A domain IV, binds dsDNA region spans residues 330 to 452; that stretch reads NFKKLDVITV…EMETIKNKIK (123 aa).

Belongs to the DnaA family. Oligomerizes as a right-handed, spiral filament on DNA at oriC.

It localises to the cytoplasm. Plays an essential role in the initiation and regulation of chromosomal replication. ATP-DnaA binds to the origin of replication (oriC) to initiate formation of the DNA replication initiation complex once per cell cycle. Binds the DnaA box (a 9 base pair repeat at the origin) and separates the double-stranded (ds)DNA. Forms a right-handed helical filament on oriC DNA; dsDNA binds to the exterior of the filament while single-stranded (ss)DNA is stabiized in the filament's interior. The ATP-DnaA-oriC complex binds and stabilizes one strand of the AT-rich DNA unwinding element (DUE), permitting loading of DNA polymerase. After initiation quickly degrades to an ADP-DnaA complex that is not apt for DNA replication. Binds acidic phospholipids. The protein is Chromosomal replication initiator protein DnaA of Streptococcus mutans serotype c (strain ATCC 700610 / UA159).